Reading from the N-terminus, the 452-residue chain is Solute carrier family 52, riboflavin transporter, member 3-B (452 aa).

The next 5 helical transmembrane spans lie at 11-31 (LFGI…PLIV), 38-58 (WLLP…PLFI), 73-93 (PVIY…AFLW), 111-131 (LSFL…PFMM), and 138-158 (LTTY…VALV). N-linked (GlcNAc...) asparagine glycosylation is found at Asn168, Asn174, Asn179, and Asn193. A run of 6 helical transmembrane segments spans residues 199–219 (FFLF…LLNL), 285–305 (VFIF…LPSV), 321–341 (AATL…FVPI), 344–364 (LVLM…IMAM), 381–401 (ALIV…KVII), and 412–432 (ALVW…LSMF).

It belongs to the riboflavin transporter family.

It is found in the cell membrane. It carries out the reaction riboflavin(in) = riboflavin(out). Functionally, plasma membrane transporter mediating the uptake by cells of the water soluble vitamin B2/riboflavin that plays a key role in biochemical oxidation-reduction reactions of the carbohydrate, lipid, and amino acid metabolism. This chain is Solute carrier family 52, riboflavin transporter, member 3-B (slc52a3b), found in Danio rerio (Zebrafish).